We begin with the raw amino-acid sequence, 294 residues long: Undecaprenyl-diphosphatase (294 aa).

The next 6 membrane-spanning stretches (helical) occupy residues 39–59, 93–113, 123–143, 198–218, 232–252, and 268–288; these read PGAA…ILYF, ATLG…GFTL, NLWI…MVDA, SFLM…IKAV, PTLV…IGFL, and IGLA…AIDP.

The protein belongs to the UppP family.

Its subcellular location is the cell membrane. The enzyme catalyses di-trans,octa-cis-undecaprenyl diphosphate + H2O = di-trans,octa-cis-undecaprenyl phosphate + phosphate + H(+). Catalyzes the dephosphorylation of undecaprenyl diphosphate (UPP). Confers resistance to bacitracin. The chain is Undecaprenyl-diphosphatase from Bifidobacterium longum (strain DJO10A).